We begin with the raw amino-acid sequence, 184 residues long: Protein YrdA (184 aa).

Belongs to the gamma-class carbonic anhydrase family.

In Escherichia coli (strain K12), this protein is Protein YrdA (yrdA).